The chain runs to 331 residues: MLLIGVAGTELSAQERDWLQHDAVAGVVLFKRNFASRTQVAELSAAIRAAAPRPQLICVDQEGGRVQRFREGYSALAPLQSFGALYATDPEGALAQARAHAQLMASEVRASGVDLSFAPVVDLARGNRAIGDRAFSDDPQVVASFTRAYVQALHAAGMGATLKHFPGHGTVLEDTHVDHASDPRPLDVLLAEDLVPFVAGIDAGADAVMMAHVVYPQVAPEPAGYASRWIEQILRGQLGFRGVVFSDDIGMAASFSAGGVAGRVHAHLDAGCDVVLVCHPELVAESLQAVAGRTLNTAALIGLIGRGALGWDGLLADAPTTSLSASFGTLA.

Residues D60, R68, R133, and 163–164 each bind substrate; that span reads KH. H176 serves as the catalytic Proton donor/acceptor. D247 functions as the Nucleophile in the catalytic mechanism.

It belongs to the glycosyl hydrolase 3 family. NagZ subfamily.

Its subcellular location is the cytoplasm. It carries out the reaction Hydrolysis of terminal non-reducing N-acetyl-D-hexosamine residues in N-acetyl-beta-D-hexosaminides.. It participates in cell wall biogenesis; peptidoglycan recycling. Functionally, plays a role in peptidoglycan recycling by cleaving the terminal beta-1,4-linked N-acetylglucosamine (GlcNAc) from peptide-linked peptidoglycan fragments, giving rise to free GlcNAc, anhydro-N-acetylmuramic acid and anhydro-N-acetylmuramic acid-linked peptides. The polypeptide is Beta-hexosaminidase (Xanthomonas campestris pv. campestris (strain B100)).